Consider the following 193-residue polypeptide: Xanthine phosphoribosyltransferase (193 aa).

Xanthine contacts are provided by L20 and T27. 128-132 lines the 5-phospho-alpha-D-ribose 1-diphosphate pocket; sequence ANGQA. A xanthine-binding site is contributed by K156.

This sequence belongs to the purine/pyrimidine phosphoribosyltransferase family. Xpt subfamily. As to quaternary structure, homodimer.

It localises to the cytoplasm. The enzyme catalyses XMP + diphosphate = xanthine + 5-phospho-alpha-D-ribose 1-diphosphate. It functions in the pathway purine metabolism; XMP biosynthesis via salvage pathway; XMP from xanthine: step 1/1. Functionally, converts the preformed base xanthine, a product of nucleic acid breakdown, to xanthosine 5'-monophosphate (XMP), so it can be reused for RNA or DNA synthesis. In Streptococcus pneumoniae (strain CGSP14), this protein is Xanthine phosphoribosyltransferase.